The primary structure comprises 301 residues: MKIAVLSRNPRLYSTRRLVEAGTERGHEMVVIDTLRAYMNIASHKPQIHYRGKPLEGFDAVIPRIGASVTFYGCAVLRQFEMMGVFPLNESVAIARSRDKLRSLQLLSRRGIGLPVTGFAHSPDDIPDLIDMVNGAPLVIKVLEGTQGIGVVLCETATAAESVIEAFMGLKQNIMVQEYIKEAGGADIRCFVVGDKVIAAMKRQAKPGEFRSNLHRGGSASLIKITPEERMTALRAAKVMGLAVAGVDILRSNHGPLVMEVNSSPGLEGIETTTGKNVAGIIIEHLEKNGGPNMTRTKGKG.

An ATP-grasp domain is found at 104–287; that stretch reads LQLLSRRGIG…VAGIIIEHLE (184 aa). Residues lysine 141, 178-179, aspartate 187, and 211-213 each bind ATP; these read EY and RSN. Mg(2+) contacts are provided by aspartate 248, glutamate 260, and asparagine 262. Mn(2+) contacts are provided by aspartate 248, glutamate 260, and asparagine 262.

Belongs to the RimK family. It depends on Mg(2+) as a cofactor. Mn(2+) serves as cofactor.

The sequence is that of Probable alpha-L-glutamate ligase from Pseudomonas fluorescens (strain Pf0-1).